A 395-amino-acid chain; its full sequence is Acetate kinase (395 aa).

Mg(2+) is bound at residue asparagine 8. Lysine 15 is an ATP binding site. A substrate-binding site is contributed by arginine 94. The active-site Proton donor/acceptor is the aspartate 151. Residues 210 to 214 (HLGNG), 284 to 286 (DMR), and 329 to 333 (GIGEN) each bind ATP. Glutamate 382 contributes to the Mg(2+) binding site.

The protein belongs to the acetokinase family. Homodimer. The cofactor is Mg(2+). It depends on Mn(2+) as a cofactor.

The protein localises to the cytoplasm. It carries out the reaction acetate + ATP = acetyl phosphate + ADP. The protein operates within metabolic intermediate biosynthesis; acetyl-CoA biosynthesis; acetyl-CoA from acetate: step 1/2. In terms of biological role, catalyzes the formation of acetyl phosphate from acetate and ATP. Can also catalyze the reverse reaction. In Protochlamydia amoebophila (strain UWE25), this protein is Acetate kinase.